The following is a 480-amino-acid chain: Amino acid permease 5 (480 aa).

A disordered region spans residues 1 to 25 (MVVQNVQDLDVLPKHSSDSFDDDGR). Over 1-31 (MVVQNVQDLDVLPKHSSDSFDDDGRPKRTGT) the chain is Cytoplasmic. A compositionally biased stretch (basic and acidic residues) spans 11–25 (VLPKHSSDSFDDDGR). Transmembrane regions (helical) follow at residues 32–52 (VWTASAHIITAVIGSGVLSLA) and 53–73 (WAVAQIGWIGGPVAMLLFSFV). Residues 74–120 (TFYTSTLLCSCYRSGDSVTGKRNYTYMDAIHSNLGGIKVKVCGVVQY) are Cytoplasmic-facing. The helical transmembrane segment at 121 to 141 (VNLFGTAIGYTIASAISLVAI) threads the bilayer. Residues 142 to 157 (QRTSCQQMNGPNDPCH) are Extracellular-facing. The chain crosses the membrane as a helical span at residues 158-178 (VNGNVYMIAFGIVQIIFSQIP). The Cytoplasmic segment spans residues 179-182 (DFDQ). A helical transmembrane segment spans residues 183 to 203 (LWWLSIVAAVMSFAYSAIGLG). Residues 204-241 (LGVSKVVENKEIKGSLTGVTVGTVTLSGTVTSSQKIWR) lie on the Extracellular side of the membrane. The chain crosses the membrane as a helical span at residues 242–262 (TFQSLGNIAFAYSYSMILIEI). The Cytoplasmic portion of the chain corresponds to 263-280 (QDTVKSPPAEVNTMRKAT). Residues 281–301 (FVSVAVTTVFYMLCGCVGYAA) traverse the membrane as a helical segment. Over 302–328 (FGDNAPGNLLAHGGFRNPYWLLDIANL) the chain is Extracellular. The chain crosses the membrane as a helical span at residues 329-349 (AIVIHLVGAYQVYCQPLFAFV). At 350 to 383 (EKEASRRFPESEFVTKEIKIQLFPGKPFNLNLFR) the chain is on the cytoplasmic side. The helical transmembrane segment at 384–404 (LVWRTFFVMTTTLISMLMPFF) threads the bilayer. At 405–406 (ND) the chain is on the extracellular side. A helical transmembrane segment spans residues 407–427 (VVGLLGAIGFWPLTVYFPVEM). The Cytoplasmic segment spans residues 428-445 (YIAQKNVPRWGTKWVCLQ). The chain crosses the membrane as a helical span at residues 446–466 (VLSVTCLFVSVAAAAGSVIGI). The Extracellular portion of the chain corresponds to 467–480 (VSDLKVYKPFQSEF).

The protein belongs to the amino acid/polyamine transporter 2 family. Amino acid/auxin permease (AAAP) (TC 2.A.18.2) subfamily. Expressed in leaves, stems, roots, siliques and flowers.

It is found in the cell membrane. Inhibited by 2,4-dinitrophenol. Functionally, amino acid-proton symporter. Stereospecific transporter with a broad specificity for glutamate and both neutral and basic amino acids. Reduced affinities for asparagine and valine. High affinity transport of the cationic amino acids arginine and lysine, but not of histidine. This chain is Amino acid permease 5 (AAP5), found in Arabidopsis thaliana (Mouse-ear cress).